We begin with the raw amino-acid sequence, 139 residues long: ATP synthase epsilon chain (139 aa).

The protein belongs to the ATPase epsilon chain family. As to quaternary structure, F-type ATPases have 2 components, CF(1) - the catalytic core - and CF(0) - the membrane proton channel. CF(1) has five subunits: alpha(3), beta(3), gamma(1), delta(1), epsilon(1). CF(0) has three main subunits: a, b and c.

The protein resides in the cell inner membrane. Functionally, produces ATP from ADP in the presence of a proton gradient across the membrane. The sequence is that of ATP synthase epsilon chain from Shigella boydii serotype 18 (strain CDC 3083-94 / BS512).